We begin with the raw amino-acid sequence, 379 residues long: uncharacterized protein (379 aa).

Disordered stretches follow at residues 1–37, 130–150, and 332–379; these read MSSI…SGQT, VRYS…LSPE, and NPPI…RGSR.

The protein belongs to the chlamydial CPn_0499/CT_392/TC_0671 family.

This is an uncharacterized protein from Chlamydia muridarum (strain MoPn / Nigg).